The primary structure comprises 353 residues: Photosystem II D2 protein (353 aa).

Residue Thr-2 is modified to N-acetylthreonine. Thr-2 is modified (phosphothreonine). A helical membrane pass occupies residues 41 to 61 (TAYFALGGWFTGTTFVTSWYT). Chlorophyll a is bound at residue His-118. Residues 125-141 (GFMLRQFELARSVQLRP) form a helical membrane-spanning segment. Residues Gln-130 and Asn-143 each contribute to the pheophytin a site. Residues 153 to 166 (VFVSVFLIYPLGQS) form a helical membrane-spanning segment. His-198 serves as a coordination point for chlorophyll a. The helical transmembrane segment at 208 to 228 (AALLCAIHGATVENTLFEDGD) threads the bilayer. Positions 215 and 262 each coordinate a plastoquinone. Residue His-215 coordinates Fe cation. His-269 contacts Fe cation. The chain crosses the membrane as a helical span at residues 279-295 (GLWMSAIGVVGLALNLR).

Belongs to the reaction center PufL/M/PsbA/D family. As to quaternary structure, PSII is composed of 1 copy each of membrane proteins PsbA, PsbB, PsbC, PsbD, PsbE, PsbF, PsbH, PsbI, PsbJ, PsbK, PsbL, PsbM, PsbT, PsbX, PsbY, PsbZ, Psb30/Ycf12, at least 3 peripheral proteins of the oxygen-evolving complex and a large number of cofactors. It forms dimeric complexes. Requires The D1/D2 heterodimer binds P680, chlorophylls that are the primary electron donor of PSII, and subsequent electron acceptors. It shares a non-heme iron and each subunit binds pheophytin, quinone, additional chlorophylls, carotenoids and lipids. There is also a Cl(-1) ion associated with D1 and D2, which is required for oxygen evolution. The PSII complex binds additional chlorophylls, carotenoids and specific lipids. as cofactor.

Its subcellular location is the plastid. It localises to the chloroplast thylakoid membrane. It catalyses the reaction 2 a plastoquinone + 4 hnu + 2 H2O = 2 a plastoquinol + O2. In terms of biological role, photosystem II (PSII) is a light-driven water:plastoquinone oxidoreductase that uses light energy to abstract electrons from H(2)O, generating O(2) and a proton gradient subsequently used for ATP formation. It consists of a core antenna complex that captures photons, and an electron transfer chain that converts photonic excitation into a charge separation. The D1/D2 (PsbA/PsbD) reaction center heterodimer binds P680, the primary electron donor of PSII as well as several subsequent electron acceptors. D2 is needed for assembly of a stable PSII complex. The protein is Photosystem II D2 protein of Adiantum capillus-veneris (Maidenhair fern).